A 1966-amino-acid polypeptide reads, in one-letter code: Alpha-protein kinase 2 (1966 aa).

Disordered stretches follow at residues 23-65 (NSSP…STGL), 211-231 (AMNS…DTDK), 1211-1259 (LKSN…AYSD), 1303-1365 (SLPN…EGAG), 1386-1423 (KTQG…VNGK), and 1437-1463 (NKPV…SVRP). The segment covering 211–227 (AMNSEQSPDQPFSIASN) has biased composition (polar residues). Residues 1211 to 1221 (LKSNKKSSSSD) are compositionally biased toward low complexity. Residues 1325–1342 (SDGKMRSKHKEKPDDKQQ) are compositionally biased toward basic and acidic residues. Basic residues predominate over residues 1388 to 1397 (QGKKKKKHVQ). The span at 1401–1417 (PKPENDAPTDVRSESRQ) shows a compositional bias: basic and acidic residues. In terms of domain architecture, Ig-like spans 1577–1659 (PRVVSEIQAD…SLIVANISVS (83 aa)). An intrachain disulfide couples cysteine 1599 to cysteine 1649. Positions 1702–1934 (KEDFLSDQYF…YCELLGLVSL (233 aa)) constitute an Alpha-type protein kinase domain. A disordered region spans residues 1937 to 1966 (KPKRTVAPPKPKTQPVPKKKTFGPVLNAKS).

The protein belongs to the protein kinase superfamily. Alpha-type protein kinase family. ALPK subfamily. In terms of tissue distribution, expressed in developing cardiac tissue.

It localises to the basolateral cell membrane. The enzyme catalyses L-seryl-[protein] + ATP = O-phospho-L-seryl-[protein] + ADP + H(+). It carries out the reaction L-threonyl-[protein] + ATP = O-phospho-L-threonyl-[protein] + ADP + H(+). Protein kinase that recognizes phosphorylation sites in which the surrounding peptides have an alpha-helical conformation. Regulates cardiac development and cardiomyocyte differentiation by negatively regulating Wnt/beta-catenin signaling. In Danio rerio (Zebrafish), this protein is Alpha-protein kinase 2 (alpk2).